Consider the following 97-residue polypeptide: UPF0223 protein lp_2149 (97 aa).

It belongs to the UPF0223 family.

In Lactiplantibacillus plantarum (strain ATCC BAA-793 / NCIMB 8826 / WCFS1) (Lactobacillus plantarum), this protein is UPF0223 protein lp_2149.